We begin with the raw amino-acid sequence, 34 residues long: MEVNILAFSATALLILFPTALLLILYVKTVSQNN.

Residues isoleucine 5 to leucine 25 form a helical membrane-spanning segment.

This sequence belongs to the PsbM family. In terms of assembly, PSII is composed of 1 copy each of membrane proteins PsbA, PsbB, PsbC, PsbD, PsbE, PsbF, PsbH, PsbI, PsbJ, PsbK, PsbL, PsbM, PsbT, PsbX, PsbY, PsbZ, Psb30/Ycf12, at least 3 peripheral proteins of the oxygen-evolving complex and a large number of cofactors. It forms dimeric complexes.

It localises to the plastid membrane. Its function is as follows. One of the components of the core complex of photosystem II (PSII). PSII is a light-driven water:plastoquinone oxidoreductase that uses light energy to abstract electrons from H(2)O, generating O(2) and a proton gradient subsequently used for ATP formation. It consists of a core antenna complex that captures photons, and an electron transfer chain that converts photonic excitation into a charge separation. This subunit is found at the monomer-monomer interface. This is Photosystem II reaction center protein M from Cuscuta gronovii (Common dodder).